The following is a 380-amino-acid chain: N-acetylcysteine deacetylase (380 aa).

Ni(2+) contacts are provided by Cys98, His100, Glu134, His158, and His350.

Belongs to the peptidase M20 family. It depends on a divalent metal cation as a cofactor.

It carries out the reaction N-acetyl-L-cysteine + H2O = L-cysteine + acetate. It participates in amino-acid biosynthesis; L-cysteine biosynthesis. Probably catalyzes the deacetylation of N-acetylcysteine (NAC) to acetate and cysteine. Is involved in a S-(2-succino)cysteine (2SC) degradation pathway that allows B.subtilis to grow on 2SC as a sole sulfur source, via its metabolization to cysteine. The chain is N-acetylcysteine deacetylase from Bacillus subtilis (strain 168).